The sequence spans 203 residues: LexA repressor (203 aa).

A DNA-binding region (H-T-H motif) is located at residues 30 to 50 (VREICQAVSLKSTSTVHGHLK). Residues S127 and K164 each act as for autocatalytic cleavage activity in the active site.

Belongs to the peptidase S24 family. As to quaternary structure, homodimer.

It catalyses the reaction Hydrolysis of Ala-|-Gly bond in repressor LexA.. Its function is as follows. Represses a number of genes involved in the response to DNA damage (SOS response), including recA and lexA. In the presence of single-stranded DNA, RecA interacts with LexA causing an autocatalytic cleavage which disrupts the DNA-binding part of LexA, leading to derepression of the SOS regulon and eventually DNA repair. The polypeptide is LexA repressor (Clostridium perfringens (strain 13 / Type A)).